We begin with the raw amino-acid sequence, 105 residues long: Large ribosomal subunit protein uL24 (105 aa).

The protein belongs to the universal ribosomal protein uL24 family. As to quaternary structure, part of the 50S ribosomal subunit.

Functionally, one of two assembly initiator proteins, it binds directly to the 5'-end of the 23S rRNA, where it nucleates assembly of the 50S subunit. Its function is as follows. One of the proteins that surrounds the polypeptide exit tunnel on the outside of the subunit. This chain is Large ribosomal subunit protein uL24, found in Xylella fastidiosa (strain M12).